The chain runs to 314 residues: Dihydroorotate dehydrogenase (fumarate) (314 aa).

Substrate is bound by residues K46, 70–74 (NSMGL), and N130. K46 participates in a covalent cross-link: Glycyl lysine isopeptide (Lys-Gly) (interchain with G-Cter in ubiquitin). 46–47 (KS) contributes to the FMN binding site. N130 is an FMN binding site. C133 functions as the Nucleophile in the catalytic mechanism. FMN-binding residues include K167 and I195. Residue 196-197 (NS) participates in substrate binding. FMN-binding positions include G224, 252–253 (GG), and 274–275 (GT).

The protein belongs to the dihydroorotate dehydrogenase family. Type 1 subfamily. In terms of assembly, homodimer. FMN serves as cofactor.

Its subcellular location is the cytoplasm. The catalysed reaction is (S)-dihydroorotate + fumarate = orotate + succinate. Its pathway is pyrimidine metabolism; UMP biosynthesis via de novo pathway. Its activity is regulated as follows. The activity is independent of the presence of oxygen. In terms of biological role, catalyzes the conversion of dihydroorotate to orotate with fumarate as the electron acceptor. Molecular oxygen can replace fumarate in vitro. Does not use oxaloacetate or NAD or NADP as electron acceptors. This is Dihydroorotate dehydrogenase (fumarate) (URA1) from Saccharomyces cerevisiae (strain ATCC 204508 / S288c) (Baker's yeast).